Reading from the N-terminus, the 468-residue chain is Glutamine synthetase (468 aa).

The 86-residue stretch at 11–96 folds into the GS beta-grasp domain; the sequence is HDVKWIDLRF…LVCDIIEPST (86 aa). One can recognise a GS catalytic domain in the interval 104 to 468; that stretch reads PRAIAHRAEE…PLEYELYYSC (365 aa). 2 residues coordinate Mg(2+): E129 and E131. E207 contacts ATP. 2 residues coordinate Mg(2+): E212 and E220. L-glutamate contacts are provided by residues 264–265 and G265; that span reads NG. Position 269 (H269) interacts with Mg(2+). Residues 271 to 273 and S273 contribute to the ATP site; that span reads HMS. Residues R321, E327, and R339 each coordinate L-glutamate. R339, R344, and R352 together coordinate ATP. E357 provides a ligand contact to Mg(2+). An L-glutamate-binding site is contributed by R359. Y397 bears the O-AMP-tyrosine mark.

This sequence belongs to the glutamine synthetase family. Oligomer of 12 subunits arranged in the form of two hexagons. It depends on Mg(2+) as a cofactor. The cofactor is Mn(2+).

It catalyses the reaction L-glutamate + NH4(+) + ATP = L-glutamine + ADP + phosphate + H(+). With respect to regulation, when cellular nitrogen levels are high, the C-terminal adenylyl transferase (AT) of GlnE inhibits GlnA by covalent transfer of an adenylyl group from ATP to Tyr-397. Conversely, when nitrogen levels are low, the N-terminal adenylyl removase (AR) of GlnE activates GlnA by removing the adenylyl group by phosphorolysis. The fully adenylated enzyme complex is inactive. Functionally, catalyzes the formation of glutamine from glutamate and ammonia. In vitro, can also use hydroxylamine, methylamine and ethylamine, with 32%, 7% and 1% activity compared to ammonia, respectively. This is Glutamine synthetase from Pseudomonas taetrolens.